Reading from the N-terminus, the 394-residue chain is Elongation factor Tu 1 (394 aa).

One can recognise a tr-type G domain in the interval 10–204; sequence KPHVNVGTIG…ALDSYIPEPQ (195 aa). The G1 stretch occupies residues 19–26; sequence GHVDHGKT. 19 to 26 serves as a coordination point for GTP; the sequence is GHVDHGKT. T26 contributes to the Mg(2+) binding site. The G2 stretch occupies residues 60–64; sequence GITIS. The tract at residues 81–84 is G3; it reads DCPG. Residues 81–85 and 136–139 each bind GTP; these read DCPGH and NKCD. Positions 136–139 are G4; sequence NKCD. The G5 stretch occupies residues 174-176; it reads SAL.

Belongs to the TRAFAC class translation factor GTPase superfamily. Classic translation factor GTPase family. EF-Tu/EF-1A subfamily. Monomer.

It is found in the cytoplasm. The catalysed reaction is GTP + H2O = GDP + phosphate + H(+). Its function is as follows. GTP hydrolase that promotes the GTP-dependent binding of aminoacyl-tRNA to the A-site of ribosomes during protein biosynthesis. The protein is Elongation factor Tu 1 of Pseudoalteromonas translucida (strain TAC 125).